Consider the following 542-residue polypeptide: E3 ubiquitin-protein ligase RNF217 (542 aa).

2 disordered regions span residues 1–140 (MGEE…TRVG) and 176–216 (APAS…TDSL). Residues 37–50 (SARAPPLRAASAEP) show a composition bias toward low complexity. A compositionally biased stretch (acidic residues) spans 122–132 (DEQQEAPPGEE). A compositionally biased stretch (pro residues) spans 185–196 (PASPPGAPPVLN). Over residues 197–213 (PPSTRSSFPSPRLSLPT) the composition is skewed to low complexity. Residues 259 to 478 (MVLMCRVCLE…LSIFGCKYRY (220 aa)) form a TRIAD supradomain region. Positions 263, 266, 283, 286, 383, 386, 391, 396, 423, and 426 each coordinate Zn(2+). The segment at 263–309 (CRVCLEDKPIKPLPCCKKAVCEECLKVYLSAQVQLGQVEIKCPITEC) adopts an RING-type 1 zinc-finger fold. The segment at 328–396 (IKYKYFLELG…HSPWHEGVNC (69 aa)) adopts an IBR-type zinc-finger fold. An RING-type 2; atypical zinc finger spans residues 423–452 (CPKCKIHIQRTEGCDHMTCSQCNTNFCYRC). Cysteine 436 is an active-site residue. Zn(2+)-binding residues include cysteine 441, cysteine 444, cysteine 449, cysteine 452, histidine 465, and cysteine 474. Residues 503-523 (LIMVLGLALGAIAVVIGLFVF) traverse the membrane as a helical segment.

Belongs to the RBR family. RNF217 subfamily. Interacts with HAX1. Mainly expressed in testis and skeletal muscle.

The protein localises to the membrane. Its subcellular location is the cytoplasm. It catalyses the reaction [E2 ubiquitin-conjugating enzyme]-S-ubiquitinyl-L-cysteine + [acceptor protein]-L-lysine = [E2 ubiquitin-conjugating enzyme]-L-cysteine + [acceptor protein]-N(6)-ubiquitinyl-L-lysine.. The protein operates within protein modification; protein ubiquitination. Functionally, E3 ubiquitin-protein ligase which accepts ubiquitin from E2 ubiquitin-conjugating enzymes in the form of a thioester and then directly transfers the ubiquitin to targeted substrates. Mediates the degradation of the iron exporter ferroportin/SLC40A1 and thus regulates iron homeostasis. The protein is E3 ubiquitin-protein ligase RNF217 (RNF217) of Homo sapiens (Human).